Reading from the N-terminus, the 307-residue chain is NAD kinase (307 aa).

Asp85 (proton acceptor) is an active-site residue. NAD(+) is bound by residues 85–86 (DG), Arg90, 159–160 (NE), Asp189, and 200–205 (TAYAFS).

This sequence belongs to the NAD kinase family. A divalent metal cation is required as a cofactor.

It localises to the cytoplasm. It carries out the reaction NAD(+) + ATP = ADP + NADP(+) + H(+). In terms of biological role, involved in the regulation of the intracellular balance of NAD and NADP, and is a key enzyme in the biosynthesis of NADP. Catalyzes specifically the phosphorylation on 2'-hydroxyl of the adenosine moiety of NAD to yield NADP. The chain is NAD kinase from Mycobacterium bovis (strain ATCC BAA-935 / AF2122/97).